The chain runs to 314 residues: Probable manganese-dependent inorganic pyrophosphatase (314 aa).

Histidine 7, aspartate 11, aspartate 13, aspartate 72, histidine 94, and aspartate 146 together coordinate Mn(2+).

It belongs to the PPase class C family. Requires Mn(2+) as cofactor.

Its subcellular location is the cytoplasm. It carries out the reaction diphosphate + H2O = 2 phosphate + H(+). This chain is Probable manganese-dependent inorganic pyrophosphatase (ppaC), found in Deinococcus radiodurans (strain ATCC 13939 / DSM 20539 / JCM 16871 / CCUG 27074 / LMG 4051 / NBRC 15346 / NCIMB 9279 / VKM B-1422 / R1).